The primary structure comprises 140 residues: Large ribosomal subunit protein uL11 (140 aa).

The protein belongs to the universal ribosomal protein uL11 family. In terms of assembly, part of the ribosomal stalk of the 50S ribosomal subunit. Interacts with L10 and the large rRNA to form the base of the stalk. L10 forms an elongated spine to which L12 dimers bind in a sequential fashion forming a multimeric L10(L12)X complex. One or more lysine residues are methylated.

Functionally, forms part of the ribosomal stalk which helps the ribosome interact with GTP-bound translation factors. The polypeptide is Large ribosomal subunit protein uL11 (Heliobacterium modesticaldum (strain ATCC 51547 / Ice1)).